The chain runs to 497 residues: Signal recognition particle subunit SRP54 2 (497 aa).

The segment at 1-297 (MVLAELGGRI…DAKPFVSRLL (297 aa)) is G-domain. GTP is bound by residues 108-117 (GLQGEVLEKP), 192-196 (DTSGR), and 250-253 (TKMD). The interval 298 to 497 (GNGDMSGFVN…LMGMFGGRDE (200 aa)) is M-domain.

The protein belongs to the GTP-binding SRP family. SRP54 subfamily. Component of a signal recognition particle (SRP) complex that consists of a 7SL RNA molecule of 300 nucleotides and six protein subunits: SRP72, SRP68, SRP54, SRP19, SRP14 and SRP9.

The protein localises to the cytoplasm. The protein resides in the endoplasmic reticulum. The catalysed reaction is GTP + H2O = GDP + phosphate + H(+). In terms of biological role, component of the signal recognition particle (SRP) complex, a ribonucleoprotein complex that mediates the cotranslational targeting of secretory and membrane proteins to the endoplasmic reticulum (ER). As part of the SRP complex, associates with the SRP receptor (SR) component SRPRA to target secretory proteins to the endoplasmic reticulum membrane. Binds to the signal sequence of presecretory proteins when they emerge from the ribosomes. Displays basal GTPase activity, and stimulates reciprocal GTPase activation of the SR subunit SRPRA. Forms a guanosine 5'-triphosphate (GTP)-dependent complex with the SR subunit SRPRA. SR compaction and GTPase mediated rearrangement of SR drive SRP-mediated cotranslational protein translocation into the ER. Requires the presence of SRP9/SRP14 and/or SRP19 to stably interact with RNA. This is Signal recognition particle subunit SRP54 2 (SRP-54B) from Arabidopsis thaliana (Mouse-ear cress).